The primary structure comprises 937 residues: Inactive tyrosine-protein kinase transmembrane receptor ROR1 (937 aa).

The first 29 residues, 1–29 (MHRPRRRGTRPPPLALLAALLLAARGADA), serve as a signal peptide directing secretion. The Extracellular portion of the chain corresponds to 30 to 406 (QETELSVSAE…KEKNKMEILY (377 aa)). The Ig-like C2-type domain occupies 42 to 141 (PTSSWNTSSE…VATNGKKVVS (100 aa)). N-linked (GlcNAc...) asparagine glycosylation is found at N47 and N66. 9 cysteine pairs are disulfide-bonded: C79–C131, C170–C235, C178–C228, C219–C260, C248–C296, C252–C282, C313–C391, C334–C374, and C362–C386. One can recognise an FZ domain in the interval 165–299 (EEDGFCQPYR…SPEAANCIRI (135 aa)). N184 carries N-linked (GlcNAc...) asparagine glycosylation. One can recognise a Kringle domain in the interval 312–391 (KCYNSTGVDY…KSDLCDIPAC (80 aa)). An N-linked (GlcNAc...) asparagine glycan is attached at N315. Residues 407–427 (ILVPSVAIPLAIAFLFFFICV) form a helical membrane-spanning segment. Over 428 to 937 (CRNNQKSSSP…HTESMISAEV (510 aa)) the chain is Cytoplasmic. The Protein kinase domain maps to 473 to 746 (VRFMEELGEC…PRFKDIHVRL (274 aa)). Residues 479–487 (LGECTFGKI) and K506 each bind ATP. Y645 carries the post-translational modification Phosphotyrosine; by autocatalysis. Residues 753 to 762 (SSHTSSTTPS) show a composition bias toward low complexity. Disordered regions lie at residues 753–778 (SSHT…ASPV), 840–890 (GPPR…HMSI), and 916–937 (QSSL…SAEV). A compositionally biased stretch (polar residues) spans 763-778 (GGNATTQTTSLSASPV). Low complexity predominate over residues 854–864 (RSPSSASGSTS). Residues 865–880 (TGHVASLPSSGSNQEA) are compositionally biased toward polar residues.

Belongs to the protein kinase superfamily. Tyr protein kinase family. ROR subfamily. Interacts with ERBB2 and IGFBP5. As to expression, at postnatal P0, expressed in heart, lung, liver, kidney, spleen and inner ear.

The protein resides in the membrane. The protein localises to the cell projection. Its subcellular location is the axon. Its function is as follows. Has very low kinase activity in vitro and is unlikely to function as a tyrosine kinase in vivo. Receptor for ligand WNT5A which activate downstream NFkB signaling pathway and may result in the inhibition of WNT3A-mediated signaling. In inner ear, crucial for spiral ganglion neurons to innervate auditory hair cells. Via IGFBP5 ligand, forms a complex with ERBB2 to enhance CREB oncogenic signaling. This is Inactive tyrosine-protein kinase transmembrane receptor ROR1 (Ror1) from Mus musculus (Mouse).